Consider the following 1355-residue polypeptide: Ecdysone-induced protein 75B, isoform A (1355 aa).

4 disordered regions span residues 60 to 91 (QHQP…QQHS), 126 to 228 (RLKN…DSSY), 248 to 268 (ELEQ…EAKP), and 308 to 344 (ATQQ…NSSA). The segment covering 66 to 76 (QLHHQHQHQHQ) has biased composition (basic residues). 2 stretches are compositionally biased toward low complexity: residues 77–91 (HQQQ…QQHS) and 143–179 (TLVK…QHQQ). Residues 200–213 (SGIDEDSPNSDEDC) show a composition bias toward acidic residues. Polar residues-rich tracts occupy residues 218–228 (PAGTSLEDSSY) and 254–264 (TTGGSNAQQQV). 2 stretches are compositionally biased toward low complexity: residues 308–321 (ATQQ…QHQH) and 330–344 (DSNC…NSSA). The nuclear receptor DNA-binding region spans 384–474 (SQLNYLCQKF…VGMSRDAVRF (91 aa)). The NR C4-type; degenerate zinc finger occupies 387–421 (NYLCQKFDEKLDTALSNSSANTGRNTPAVTANEDA). The NR C4-type zinc finger occupies 438-457 (CTKNQQCSILRINRNRCQYC). In terms of domain architecture, NR LBD spans 508–756 (DQPRLLAAVL…QQMWSMEDGN (249 aa)). 6 disordered regions span residues 780-821 (KSPL…SALA), 927-964 (LDSP…SVDD), 987-1007 (VSVS…KRQI), 1051-1117 (AEAD…SSHS), 1147-1260 (ENST…SNSA), and 1312-1344 (TVTA…NPGL). 5 stretches are compositionally biased toward low complexity: residues 797–809 (GSPS…GVSL), 948–960 (SSGG…SPRS), 987–1001 (VSVS…STSS), 1053–1098 (ADAS…AQSQ), and 1106–1117 (SSPKASMASSHS). 2 stretches are compositionally biased toward polar residues: residues 1149–1162 (STAA…VGNR) and 1174–1196 (AVQN…QRQQ). Composition is skewed to low complexity over residues 1197–1233 (SVSP…SASS), 1242–1260 (STSN…SNSA), and 1315–1343 (ASNG…PNPG).

This sequence belongs to the nuclear hormone receptor family. NR1 subfamily.

The protein resides in the nucleus. In terms of biological role, implicated in the regulation of ecdysone-triggered gene hierarchies. Probably plays a key role in mediating the regulation of the larval molt by 20-OH-ecdysone. The chain is Ecdysone-induced protein 75B, isoform A (Eip75B) from Drosophila melanogaster (Fruit fly).